The following is a 198-amino-acid chain: RxLR effector protein CRE4 (198 aa).

Positions 1-20 (MLRSFLLIVATVSLFGQCKP) are cleaved as a signal peptide. Residues 43–52 (RFVRTNDEER) carry the RxLR-dEER motif.

The protein belongs to the RxLR effector family.

The protein resides in the secreted. Its subcellular location is the host cytoplasm. It is found in the host nucleus. The protein localises to the host nucleolus. In terms of biological role, effector that is involved in host plant infection. Contributes to virulence during the early infection stage, by inhibiting plant defense responses induced by both PAMP-triggered immunity (PTI) and effector-triggered immunity (ETI). This Phytophthora infestans (strain T30-4) (Potato late blight agent) protein is RxLR effector protein CRE4 (CRE4).